A 181-amino-acid chain; its full sequence is Protein Syd (181 aa).

It belongs to the Syd family.

The protein resides in the cell inner membrane. Its function is as follows. Interacts with the SecY protein in vivo. May bind preferentially to an uncomplexed state of SecY, thus functioning either as a chelating agent for excess SecY in the cell or as a regulatory factor that negatively controls the translocase function. The polypeptide is Protein Syd (Salmonella agona (strain SL483)).